Consider the following 113-residue polypeptide: Fruiting body-specific class I hydrophobin fbh1 (113 aa).

The N-terminal stretch at 1–20 is a signal peptide; sequence MFSIRIATVVLAASALLAAA. 4 disulfides stabilise this stretch: cysteine 33–cysteine 92, cysteine 40–cysteine 86, cysteine 41–cysteine 73, and cysteine 93–cysteine 106.

Belongs to the fungal hydrophobin family. In terms of assembly, self-assembles to form functional amyloid fibrils called rodlets. Self-assembly into fibrillar rodlets occurs spontaneously at hydrophobic:hydrophilic interfaces and the rodlets further associate laterally to form amphipathic monolayers.

The protein resides in the secreted. It localises to the cell wall. Functionally, aerial growth, conidiation, and dispersal of filamentous fungi in the environment rely upon a capability of their secreting small amphipathic proteins called hydrophobins (HPBs) with low sequence identity. Class I can self-assemble into an outermost layer of rodlet bundles on aerial cell surfaces, conferring cellular hydrophobicity that supports fungal growth, development and dispersal; whereas Class II form highly ordered films at water-air interfaces through intermolecular interactions but contribute nothing to the rodlet structure. Fbh1 is a fruiting body-specific class I hydrophobin that is involved in the growth rate and primordia formation. The polypeptide is Fruiting body-specific class I hydrophobin fbh1 (Pleurotus ostreatus (strain PC15) (Oyster mushroom)).